The primary structure comprises 245 residues: Chymotrypsinogen A (245 aa).

Cystine bridges form between Cys-1–Cys-122, Cys-42–Cys-58, Cys-136–Cys-201, Cys-168–Cys-182, and Cys-191–Cys-220. Positions 14-15 (SR) are excised as a propeptide. The 228-residue stretch at 16 to 243 (IVNGEEAVPG…LVNWVQQTLA (228 aa)) folds into the Peptidase S1 domain. Catalysis depends on charge relay system residues His-57 and Asp-102. Positions 147 to 148 (TN) are excised as a propeptide. Ser-195 functions as the Charge relay system in the catalytic mechanism.

It belongs to the peptidase S1 family.

It localises to the secreted. The protein resides in the extracellular space. It carries out the reaction Preferential cleavage: Tyr-|-Xaa, Trp-|-Xaa, Phe-|-Xaa, Leu-|-Xaa.. The sequence is that of Chymotrypsinogen A from Bos taurus (Bovine).